The sequence spans 894 residues: Nitrate reductase [NADPH] (894 aa).

Positions 1 to 79 are disordered; it reads MAVKSQLGVT…PEDLKTPDHR (79 aa). The span at 7-16 shows a compositional bias: polar residues; the sequence is LGVTYTTKTF. Positions 69 to 79 are enriched in basic and acidic residues; sequence LPEDLKTPDHR. Position 169 (Cys169) interacts with Mo-molybdopterin. Residues 535 to 610 form the Cytochrome b5 heme-binding domain; sequence VRIISLEELK…MPQYHIGTLN (76 aa). Heme-binding residues include His570 and His593. In terms of domain architecture, FAD-binding FR-type spans 638–749; it reads KYWSKAILET…KGPVGKFEYL (112 aa). FAD-binding positions include 692 to 695, 709 to 713, 723 to 725, Ser773, and Thr776; these read RAYT, LIKIY, and KMT.

Belongs to the nitrate reductase family. Homodimer. FAD is required as a cofactor. The cofactor is heme. Requires Mo-molybdopterin as cofactor.

It catalyses the reaction nitrite + NADP(+) + H2O = nitrate + NADPH + H(+). Functionally, nitrate reductase is a key enzyme involved in the first step of nitrate assimilation in plants, fungi and bacteria. The protein is Nitrate reductase [NADPH] (NIA) of Beauveria bassiana (White muscardine disease fungus).